The primary structure comprises 586 residues: MVVGKIIKISGPVVVAEGMKGSQMFEVVKVGNEGLTGEIIQLTEDEAIIQVYEETAGIKPGEGVEGTGAPLSVELGPGMLKAMYDGIQRPLNEIENATDSIYIPRGVSVPSISREIKWDFEPTAAAGDEVITGDVIGTVQETASIVHKIMIPFGVSGKIKEIKAGSFTVEETVAVVETAEGEKEIMMMQKWPVRKPRPSKGKQAPVIPLITGQRVEDTFFGLAKGGASAIPGPFGSGKTVTQHQLAKWSDVDVVVYIGCGERGNEMTEVIEEFPHLDDIKTGNKLMDRTVLIANTSNMPVAAREASVYTGITIAEYFRDQGLGVLLTADSTSRWAEAMREISGRLEEMPGEEGYPAYLSSKLAQFYERAGRVECLGSENKQGFVCIVGAVSPPGGDFSEPVTSNTLRIVKVFWALDANLARRRHFPAINWLTSYSLYIDDIAGWWQQNTAADWRSLRDEAMSLLQKEAELQEIVQLVGPDALPDRERVILEIARMLREDFLQQDAYHEVDSYCSPLKQYNMLKIIMTFYKKGLDAVAKGADPAGISAVTVKGDIARMKYLTDDEFINTKVPEIINKMESELGALIK.

An ATP-binding site is contributed by 232–239; the sequence is GPFGSGKT.

Belongs to the ATPase alpha/beta chains family. In terms of assembly, has multiple subunits with at least A(3), B(3), C, D, E, F, H, I and proteolipid K(x).

The protein resides in the cell membrane. The enzyme catalyses ATP + H2O + 4 H(+)(in) = ADP + phosphate + 5 H(+)(out). In terms of biological role, component of the A-type ATP synthase that produces ATP from ADP in the presence of a proton gradient across the membrane. The A chain is the catalytic subunit. This Methanococcus maripaludis (strain DSM 14266 / JCM 13030 / NBRC 101832 / S2 / LL) protein is A-type ATP synthase subunit A.